We begin with the raw amino-acid sequence, 250 residues long: MAPRWKWKGAEAKALAEPISKSVSELQLSLAETESSGTLSSCNVLLAVEPEQAELLDRCCFGRLVLSAEKIKKWIQLSFEEAFFLHYNLKCIKISLQGRCLENEVDTWLYMKSKRPNFPMFFKAYSHLRSKNWVLRSGLQYGVDFVAYRHHPSLVHSEYSVLVQSGDSDRLRVWSDIHCAVRLSGSVAKTLLTLYVNGNFKGEDVNLLVCLENFTVEEQTISRWSPELSREDQSTNSKQHVPNVSNLNTL.

Catalysis depends on residues Y148, H156, and K189. Residues 225 to 250 are disordered; sequence SPELSREDQSTNSKQHVPNVSNLNTL. Residues 234 to 250 are compositionally biased toward polar residues; sequence STNSKQHVPNVSNLNTL.

It belongs to the tRNA-intron endonuclease family. As to quaternary structure, tRNA splicing endonuclease is a heterotetramer composed of SEN2, SEN15, SEN34/LENG5 and SEN54.

The protein resides in the nucleus. It carries out the reaction pretRNA = a 3'-half-tRNA molecule with a 5'-OH end + a 5'-half-tRNA molecule with a 2',3'-cyclic phosphate end + an intron with a 2',3'-cyclic phosphate and a 5'-hydroxyl terminus.. In terms of biological role, constitutes one of the two catalytic subunit of the tRNA-splicing endonuclease complex, a complex responsible for identification and cleavage of the splice sites in pre-tRNA. It cleaves pre-tRNA at the 5'- and 3'-splice sites to release the intron. The products are an intron and two tRNA half-molecules bearing 2',3'-cyclic phosphate and 5'-OH termini. There are no conserved sequences at the splice sites, but the intron is invariably located at the same site in the gene, placing the splice sites an invariant distance from the constant structural features of the tRNA body. Probably carries the active site for 5'-splice site cleavage. The polypeptide is tRNA-splicing endonuclease subunit Sen2-2 (SEN2) (Arabidopsis thaliana (Mouse-ear cress)).